We begin with the raw amino-acid sequence, 498 residues long: Pre-glycoprotein polyprotein GP complex (498 aa).

The N-myristoyl glycine; by host moiety is linked to residue G2. Over 2–17 (GQIVTMFEALPHIIDE) the chain is Extracellular. A helical membrane pass occupies residues 18 to 33 (VINIVIIVLIIITSIK). The Cytoplasmic portion of the chain corresponds to 34–58 (AVYNFATCGILALVSFLFLAGRSCG). C57 provides a ligand contact to Zn(2+). The Extracellular portion of the chain corresponds to 59–438 (MYGLNGPDIY…QGSTPLALMD (380 aa)). N-linked (GlcNAc...) asparagine; by host glycans are attached at residues N85, N95, N114, N124, and N171. 6 disulfide bridges follow: C92/C239, C123/C160, C184/C220, C285/C298, C307/C316, and C370/C391. N232 is a glycosylation site (N-linked (GlcNAc...) asparagine; by host). Residues N371, N396, and N401 are each glycosylated (N-linked (GlcNAc...) asparagine; by host). A helical transmembrane segment spans residues 439 to 459 (LLMFSTSAYLISIFLHFVRIP). At 460 to 498 (THRHIKGGSCPKPHRLTNKGICSCGAFKVPGVKTIWKRR) the chain is on the cytoplasmic side. 6 residues coordinate Zn(2+): H461, H463, C469, H473, C481, and C483.

This sequence belongs to the arenaviridae GPC protein family. Interacts with glycoprotein G2. Part of the GP complex (GP-C) together with glycoprotein G1 and glycoprotein G2. The GP-complex interacts with protein Z, which interacts with ribonucleocapsid; these interactions may induce virion budding. As to quaternary structure, homotrimer; disulfide-linked. In pre-fusion state, G1 homotrimers bind G2 homotrimers via ionic interactions. Part of the GP complex (GP-C) together with glycoprotein G2 and the stable signal peptide. Interacts with the primary host receptor DAG1 on the cell surface. The GP-complex interacts with protein Z, which interacts with ribonucleocapsid; these interactions may induce virion budding. In terms of assembly, homotrimer. Interacts with the stable signal peptide. In pre-fusion state, G2 homotrimers bind G1 homotrimers via ionic interactions. Part of the GP complex (GP-C) together with glycoprotein G1 and the stable signal peptide. Acidification in the endosome triggers rearrangements, which ultimately leads to a 6 helix bundle formed by the two heptad repeat domains (HR1 and HR2) in post-fusion state. The GP-complex interacts with protein Z, which interacts with ribonucleocapsid; these interactions may induce virion budding. In terms of processing, specific enzymatic cleavages in vivo yield mature proteins. GP-C polyprotein is cleaved in the endoplasmic reticulum by the host protease MBTPS1. Only cleaved glycoprotein is incorporated into virions. Post-translationally, the SSP remains stably associated with the GP complex following cleavage by signal peptidase and plays crucial roles in the trafficking of GP through the secretory pathway. Myristoylation is necessary for GP2-mediated fusion activity.

It localises to the virion membrane. The protein resides in the host endoplasmic reticulum membrane. The protein localises to the host Golgi apparatus membrane. Its subcellular location is the host cell membrane. Its function is as follows. Functions as a cleaved signal peptide that is retained as the third component of the GP complex (GP-C). Helps to stabilize the spike complex in its native conformation. The SSP is required for efficient glycoprotein expression, post-translational maturation cleavage of G1 and G2, glycoprotein transport to the cell surface plasma membrane, formation of infectious virus particles, and acid pH-dependent glycoprotein-mediated cell fusion. In terms of biological role, forms the virion spikes together with glycoprotein G2. The glycoprotein spike trimers are connected to the underlying matrix. Interacts with the host receptor. Mediates virus attachment to the host primary receptor alpha-dystroglycan DAG1 (alpha-DG) at the cell surface. Down-modulates host DAG1. Forms the virion spikes together with glycoprotein G1. The glycoprotein spike trimers are connected to the underlying matrix. Class I viral fusion protein that directs fusion of viral and host endosomal membranes, leading to delivery of the nucleocapsid into the cytoplasm. Membrane fusion is mediated by irreversible conformational changes induced by acidification. This Homo sapiens (Human) protein is Pre-glycoprotein polyprotein GP complex.